A 332-amino-acid polypeptide reads, in one-letter code: Methionyl-tRNA formyltransferase (332 aa).

Residue 124–127 coordinates (6S)-5,6,7,8-tetrahydrofolate; the sequence is SLLP.

It belongs to the Fmt family.

It carries out the reaction L-methionyl-tRNA(fMet) + (6R)-10-formyltetrahydrofolate = N-formyl-L-methionyl-tRNA(fMet) + (6S)-5,6,7,8-tetrahydrofolate + H(+). In terms of biological role, attaches a formyl group to the free amino group of methionyl-tRNA(fMet). The formyl group appears to play a dual role in the initiator identity of N-formylmethionyl-tRNA by promoting its recognition by IF2 and preventing the misappropriation of this tRNA by the elongation apparatus. This chain is Methionyl-tRNA formyltransferase, found in Polynucleobacter asymbioticus (strain DSM 18221 / CIP 109841 / QLW-P1DMWA-1) (Polynucleobacter necessarius subsp. asymbioticus).